Reading from the N-terminus, the 535-residue chain is uncharacterized protein (535 aa).

Helical transmembrane passes span 7–27 (DFDVVVVGGGHNGLVAAAYLA) and 509–529 (GGAVSGIGGHNAAMAVLACLA).

The protein resides in the cell membrane. This is an uncharacterized protein from Mycobacterium bovis (strain ATCC BAA-935 / AF2122/97).